We begin with the raw amino-acid sequence, 885 residues long: Probable LRR receptor-like serine/threonine-protein kinase At1g51820 (885 aa).

A signal peptide spans 1–20; it reads MERHFVFIATYLLIFHLVQA. The Extracellular portion of the chain corresponds to 21 to 509; the sequence is QNQTGFISVD…GHKKKSVIVP (489 aa). N-linked (GlcNAc...) asparagine glycans are attached at residues N22, N93, N135, N194, N228, N250, N254, N281, N287, N424, N437, N456, and N461. 3 LRR repeats span residues 403–424, 427–447, and 451–473; these read IITS…AIKN, HLQI…EFLA, and SLLV…LLQK. Residues 510–530 form a helical membrane-spanning segment; that stretch reads VVASIASIAVLIGALVLFLIL. Over 531–885 the chain is Cytoplasmic; it reads RKKRSPKVEG…FGTEVSPNAR (355 aa). The region spanning 578 to 851 is the Protein kinase domain; the sequence is NNFQRILGKG…QVVIELNECL (274 aa). Residues 584 to 592 and K606 contribute to the ATP site; that span reads LGKGGFGMV. Y651 is subject to Phosphotyrosine. Catalysis depends on D703, which acts as the Proton acceptor. S737 is modified (phosphoserine). Phosphothreonine is present on residues T738 and T743. Y751 bears the Phosphotyrosine mark.

Belongs to the protein kinase superfamily. Ser/Thr protein kinase family.

Its subcellular location is the membrane. The catalysed reaction is L-seryl-[protein] + ATP = O-phospho-L-seryl-[protein] + ADP + H(+). The enzyme catalyses L-threonyl-[protein] + ATP = O-phospho-L-threonyl-[protein] + ADP + H(+). The chain is Probable LRR receptor-like serine/threonine-protein kinase At1g51820 from Arabidopsis thaliana (Mouse-ear cress).